The following is a 546-amino-acid chain: Chaperonin GroEL (546 aa).

ATP is bound by residues 30-33, K51, 87-91, G415, 479-481, and D495; these read TLGP, DGTTT, and NAA.

The protein belongs to the chaperonin (HSP60) family. Forms a cylinder of 14 subunits composed of two heptameric rings stacked back-to-back. Interacts with the co-chaperonin GroES.

The protein resides in the cytoplasm. The enzyme catalyses ATP + H2O + a folded polypeptide = ADP + phosphate + an unfolded polypeptide.. Its function is as follows. Together with its co-chaperonin GroES, plays an essential role in assisting protein folding. The GroEL-GroES system forms a nano-cage that allows encapsulation of the non-native substrate proteins and provides a physical environment optimized to promote and accelerate protein folding. The sequence is that of Chaperonin GroEL from Xanthomonas axonopodis pv. citri (strain 306).